A 61-amino-acid chain; its full sequence is Large ribosomal subunit protein uL30 (61 aa).

It belongs to the universal ribosomal protein uL30 family. Part of the 50S ribosomal subunit.

The chain is Large ribosomal subunit protein uL30 from Corynebacterium glutamicum (strain R).